The primary structure comprises 356 residues: MKRDLLLTKIEEYKNIMPWYVLDYYQSKLSVPYSFTTLYEYLKEYKRFFEWLIDSDLSKAARIADVDLTTLEHLSKKDMEAFILYLRERPSLNTYSTKKGVSQTTINRTLSALSSLYKYLTEEVENEHGEPYFYRNVMKKVATKKKRETLAARAENIKQKLFLGDETMAFLDYVDKEYEHKLSNRAKASFRKNKERDLAIIALLLASGIRLSEAVNLDLKDVNLNMMLVEVTRKGGKRDSVNVAAFAKPHLEAYLSVRKDRYQAEKQDVAFFLTAYRGLPNRIDASSIEKMVGKYSESFKIRVTPHKLRHTLATRLYDTTKSQVLVSHQLGHASTQVTDLYTHIVNDEQKNALDKL.

A Core-binding (CB) domain is found at 16 to 121; sequence IMPWYVLDYY…ALSSLYKYLT (106 aa). One can recognise a Tyr recombinase domain in the interval 169 to 354; that stretch reads AFLDYVDKEY…VNDEQKNALD (186 aa). Residues Arg210, Lys234, His306, Arg309, and His332 contribute to the active site. Tyr341 acts as the O-(3'-phospho-DNA)-tyrosine intermediate in catalysis.

It belongs to the 'phage' integrase family. XerS subfamily.

It is found in the cytoplasm. Its activity is regulated as follows. FtsK is required for recombination. Site-specific tyrosine recombinase, which acts by catalyzing the cutting and rejoining of the recombining DNA molecules. Essential to convert dimers of the bacterial chromosome into monomers to permit their segregation at cell division. The protein is Tyrosine recombinase XerS of Streptococcus equi subsp. zooepidemicus (strain H70).